The following is a 299-amino-acid chain: Adenylate kinase (299 aa).

The interval methionine 1 to glycine 30 is disordered. Glycine 85 to threonine 90 contributes to the ATP binding site. An NMP region spans residues alanine 107–valine 136. Residues threonine 108, arginine 113, glycine 134–valine 136, glycine 163–arginine 166, and glutamine 170 contribute to the AMP site. The tract at residues glycine 204–aspartate 241 is LID. ATP-binding positions include arginine 205 and serine 214–tyrosine 215. A disordered region spans residues glycine 212 to glutamine 237. Residues tyrosine 215–threonine 227 are compositionally biased toward basic and acidic residues. AMP-binding residues include arginine 238 and arginine 249. Glutamine 277 contributes to the ATP binding site.

This sequence belongs to the adenylate kinase family. AK2 subfamily. In terms of assembly, monomer.

It is found in the cytoplasm. The protein localises to the cytosol. It localises to the mitochondrion intermembrane space. The enzyme catalyses AMP + ATP = 2 ADP. Its function is as follows. Catalyzes the reversible transfer of the terminal phosphate group between ATP and AMP. Plays an important role in cellular energy homeostasis and in adenine nucleotide metabolism. Adenylate kinase activity is critical for regulation of the phosphate utilization and the AMP de novo biosynthesis pathways. The sequence is that of Adenylate kinase from Mycosarcoma maydis (Corn smut fungus).